A 406-amino-acid polypeptide reads, in one-letter code: Exo-alpha-sialidase (406 aa).

A signal peptide spans 1 to 20; the sequence is MQSMRFMILALLVQFLPAWA. Residues Arg-59, Arg-78, Asp-84, and Gln-148 each coordinate substrate. Residue Asn-235 is glycosylated (N-linked (GlcNAc...) asparagine). Residues Arg-265, Arg-322, 322–323, 331–332, Lys-337, Tyr-358, Asp-376, and 376–378 contribute to the substrate site; these read RR, YD, and DFF. Asn-396 is a glycosylation site (N-linked (GlcNAc...) asparagine).

Belongs to the glycosyl hydrolase 33 family.

It catalyses the reaction Hydrolysis of alpha-(2-&gt;3)-, alpha-(2-&gt;6)-, alpha-(2-&gt;8)- glycosidic linkages of terminal sialic acid residues in oligosaccharides, glycoproteins, glycolipids, colominic acid and synthetic substrates.. Its function is as follows. Sialidase is able to release sialic acid from a wide variety of natural substrates including bovine salivary mucin, colominic acid, bovine fetuin, a serum glycoprotein containing both alpha-2-6 and alpha-2-3-linkages in a ratio of about 3:2, and glycoproteins and glycolipids from thermally denatured human lung epithelial cells. Does not show any trans-sialidase activity since it is able to remove terminal sialic acid residues but is unable to catalyze their transfer to the acceptor substrate. 2-keto-3-deoxynononic acid (KDN) is the preferred substrate and A.fumigatus can utilize KDN as a sole carbon source. This chain is Exo-alpha-sialidase, found in Aspergillus fumigatus (strain ATCC MYA-4609 / CBS 101355 / FGSC A1100 / Af293) (Neosartorya fumigata).